Consider the following 177-residue polypeptide: Large ribosomal subunit protein uL6 (177 aa).

Belongs to the universal ribosomal protein uL6 family. Part of the 50S ribosomal subunit.

In terms of biological role, this protein binds to the 23S rRNA, and is important in its secondary structure. It is located near the subunit interface in the base of the L7/L12 stalk, and near the tRNA binding site of the peptidyltransferase center. This Xanthobacter autotrophicus (strain ATCC BAA-1158 / Py2) protein is Large ribosomal subunit protein uL6.